Consider the following 472-residue polypeptide: Relaxin-3 receptor 1 (472 aa).

Over 1–81 (MQVASATPAA…ESTDTEARVR (81 aa)) the chain is Extracellular. N-linked (GlcNAc...) asparagine glycosylation is found at Asn36 and Asn40. Residues 82–102 (ILISAVYWVVCALGLAGNLLV) traverse the membrane as a helical segment. The Cytoplasmic portion of the chain corresponds to 103 to 119 (LYLMKSKQGWRKSSINL). Residues 120 to 140 (FVTNLALTDFQFVLTLPFWAV) traverse the membrane as a helical segment. Residues 141 to 156 (ENALDFKWPFGKAMCK) lie on the Extracellular side of the membrane. A disulfide bridge connects residues Cys155 and Cys247. A helical transmembrane segment spans residues 157–177 (IVSMVTSMNMYASVFFLTAMS). Topologically, residues 178–215 (VARYHSVASALKSHRTRGRGRGDCCGQSLRESCCFSAK) are cytoplasmic. Residues 216-236 (VLCGLIWASAALASLPNAIFS) form a helical membrane-spanning segment. Topologically, residues 237 to 270 (TTIRVLGEELCLMHFPDKLLGWDRQFWLGLYHLQ) are extracellular. Residues 271 to 291 (KVLLGFLLPLSIISLCYLLLV) traverse the membrane as a helical segment. Topologically, residues 292-298 (RFISDRR) are cytoplasmic. The chain crosses the membrane as a helical span at residues 299-319 (VVGTTDAVGAAAAPGGGLSTA). At 320–332 (SARRRSKVTKSVT) the chain is on the extracellular side. A helical membrane pass occupies residues 333–353 (IVVLSFFLCWLPNQALTTWSI). Topologically, residues 354-472 (LIKFNAVPFS…YDLLPSSSAY (119 aa)) are cytoplasmic.

It belongs to the G-protein coupled receptor 1 family.

Its subcellular location is the cell membrane. Functionally, receptor for RNL3/relaxin-3. Binding of the ligand inhibit cAMP accumulation. The sequence is that of Relaxin-3 receptor 1 (Rxfp3) from Mus musculus (Mouse).